We begin with the raw amino-acid sequence, 476 residues long: ATP synthase subunit beta (476 aa).

Residue 154–161 (GGAGVGKT) participates in ATP binding.

It belongs to the ATPase alpha/beta chains family. In terms of assembly, F-type ATPases have 2 components, CF(1) - the catalytic core - and CF(0) - the membrane proton channel. CF(1) has five subunits: alpha(3), beta(3), gamma(1), delta(1), epsilon(1). CF(0) has four main subunits: a(1), b(1), b'(1) and c(9-12).

The protein resides in the cell inner membrane. It catalyses the reaction ATP + H2O + 4 H(+)(in) = ADP + phosphate + 5 H(+)(out). Functionally, produces ATP from ADP in the presence of a proton gradient across the membrane. The catalytic sites are hosted primarily by the beta subunits. This Rhodopseudomonas palustris (strain BisA53) protein is ATP synthase subunit beta.